Consider the following 133-residue polypeptide: MSNHDPISDMLTRIRNASQKKHTTTTIPGSKMSLSIAKVLQKEGFISEINEEGEGYKSQIILGLKYSGKNKFPTIRSMQRVSKPGLRIYKNTRALPKVLGGLGVAIISTSKGVMSDRDARKQGIGGEVLCYVY.

Belongs to the universal ribosomal protein uS8 family. Part of the 30S ribosomal subunit. Contacts proteins S5 and S12.

Functionally, one of the primary rRNA binding proteins, it binds directly to 16S rRNA central domain where it helps coordinate assembly of the platform of the 30S subunit. The protein is Small ribosomal subunit protein uS8 of Prochlorococcus marinus (strain MIT 9215).